The following is a 343-amino-acid chain: L-threonine 3-dehydrogenase (343 aa).

Cys38 contacts Zn(2+). Active-site charge relay system residues include Thr40 and His43. Zn(2+) is bound by residues His63, Glu64, Cys93, Cys96, Cys99, and Cys107. NAD(+)-binding positions include Ile175, Asp195, Arg200, 262–264 (LGI), and 286–287 (IY).

This sequence belongs to the zinc-containing alcohol dehydrogenase family. As to quaternary structure, homotetramer. Zn(2+) is required as a cofactor.

It is found in the cytoplasm. It carries out the reaction L-threonine + NAD(+) = (2S)-2-amino-3-oxobutanoate + NADH + H(+). It functions in the pathway amino-acid degradation; L-threonine degradation via oxydo-reductase pathway; glycine from L-threonine: step 1/2. Catalyzes the NAD(+)-dependent oxidation of L-threonine to 2-amino-3-ketobutyrate. This is L-threonine 3-dehydrogenase from Burkholderia thailandensis (strain ATCC 700388 / DSM 13276 / CCUG 48851 / CIP 106301 / E264).